Consider the following 122-residue polypeptide: Small ribosomal subunit protein uS13 (122 aa).

Residues 99–122 form a disordered region; sequence RGQRTHTNARTRKGPAKAIAGKKK.

The protein belongs to the universal ribosomal protein uS13 family. In terms of assembly, part of the 30S ribosomal subunit. Forms a loose heterodimer with protein S19. Forms two bridges to the 50S subunit in the 70S ribosome.

Functionally, located at the top of the head of the 30S subunit, it contacts several helices of the 16S rRNA. In the 70S ribosome it contacts the 23S rRNA (bridge B1a) and protein L5 of the 50S subunit (bridge B1b), connecting the 2 subunits; these bridges are implicated in subunit movement. Contacts the tRNAs in the A and P-sites. The sequence is that of Small ribosomal subunit protein uS13 from Rhizobium etli (strain CIAT 652).